Here is a 202-residue protein sequence, read N- to C-terminus: Large ribosomal subunit protein bL25 (202 aa).

Residues 1 to 21 (MSKESYELKAEARERVGKGSS) form a disordered region.

Belongs to the bacterial ribosomal protein bL25 family. CTC subfamily. Part of the 50S ribosomal subunit; part of the 5S rRNA/L5/L18/L25 subcomplex. Contacts the 5S rRNA. Binds to the 5S rRNA independently of L5 and L18.

Its function is as follows. This is one of the proteins that binds to the 5S RNA in the ribosome where it forms part of the central protuberance. The chain is Large ribosomal subunit protein bL25 from Agrobacterium fabrum (strain C58 / ATCC 33970) (Agrobacterium tumefaciens (strain C58)).